We begin with the raw amino-acid sequence, 260 residues long: Winged helix repair factor 1 (260 aa).

Winged helix domain stretches follow at residues 38–110 (FTED…MVVM), 126–185 (SRAT…LAVP), and 186–260 (GAGR…ISET).

Belongs to the STK19 family. As to quaternary structure, monomer in solution. Homodimer; when bound to DNA. Component of a transcription-coupled nucleotide excision repair (TC-NER) complex which assembles and interacts with the multiprotein RNA polymerase II complex when it stalls at DNA lesions.

It localises to the nucleus. Its function is as follows. DNA-binding protein which is required for efficient transcription-coupled nucleotide excision repair (TC-NER). Acts as part of a TC-NER complex which assembles and interacts with RNA polymerase II (RNAPII) when it stalls at DNA lesions. In Xenopus laevis (African clawed frog), this protein is Winged helix repair factor 1.